The chain runs to 153 residues: CASP-like protein 5B1 (153 aa).

The Cytoplasmic segment spans residues 1-20 (MRELAGSPGTWSGLSLRVGQ). A helical membrane pass occupies residues 21-41 (LVFAAASVCATASALGFAAYT). Residue A42 is a topological domain, extracellular. The chain crosses the membrane as a helical span at residues 43–63 (FCYLIASMGLQALWSLGLACL). Over 64 to 76 (DCYALKFKKDLHS) the chain is Cytoplasmic. A helical transmembrane segment spans residues 77–97 (AVLLSLFVVGDWVTAILSFAA). Topologically, residues 98–128 (SCSAAGVVVLFDRDIYACRNPQLPCGRFELA) are extracellular. A helical membrane pass occupies residues 129–149 (IACAFLSWAFSATSALVMFWL). The Cytoplasmic segment spans residues 150 to 153 (LASL).

It belongs to the Casparian strip membrane proteins (CASP) family. In terms of assembly, homodimer and heterodimers.

The protein resides in the cell membrane. In Oryza sativa subsp. indica (Rice), this protein is CASP-like protein 5B1.